The following is a 525-amino-acid chain: uncharacterized protein (525 aa).

Positions 1–21 are cleaved as a signal peptide; the sequence is MLECLSALLVLFAGGGGSVLA. Residues 22–448 are Extracellular-facing; sequence AVQSKTVADP…ISAASQLDKR (427 aa). A disordered region spans residues 242-264; the sequence is KVSSENCSKDTDDKSGSKKERNT. Residues 449-469 traverse the membrane as a helical segment; sequence IFIFTAITVSITTLMMLGFSY. The Cytoplasmic portion of the chain corresponds to 470–525; sequence RSRVSFRDHSIDDSDDDNDWSDDEVEFDEEYFYSLPVSIPEKGISLDKMAQQLGVE.

Its subcellular location is the membrane. This is an uncharacterized protein from Saccharomyces cerevisiae (strain YJM789) (Baker's yeast).